A 163-amino-acid chain; its full sequence is ATP synthase subunit b 2 (163 aa).

A helical transmembrane segment spans residues 5-25 (SLATLWATIALIIFLGVAIYI).

Belongs to the ATPase B chain family. In terms of assembly, F-type ATPases have 2 components, F(1) - the catalytic core - and F(0) - the membrane proton channel. F(1) has five subunits: alpha(3), beta(3), gamma(1), delta(1), epsilon(1). F(0) has three main subunits: a(1), b(2) and c(10-14). The alpha and beta chains form an alternating ring which encloses part of the gamma chain. F(1) is attached to F(0) by a central stalk formed by the gamma and epsilon chains, while a peripheral stalk is formed by the delta and b chains.

Its subcellular location is the cell inner membrane. In terms of biological role, f(1)F(0) ATP synthase produces ATP from ADP in the presence of a proton or sodium gradient. F-type ATPases consist of two structural domains, F(1) containing the extramembraneous catalytic core and F(0) containing the membrane proton channel, linked together by a central stalk and a peripheral stalk. During catalysis, ATP synthesis in the catalytic domain of F(1) is coupled via a rotary mechanism of the central stalk subunits to proton translocation. Its function is as follows. Component of the F(0) channel, it forms part of the peripheral stalk, linking F(1) to F(0). The sequence is that of ATP synthase subunit b 2 from Mesorhizobium japonicum (strain LMG 29417 / CECT 9101 / MAFF 303099) (Mesorhizobium loti (strain MAFF 303099)).